Here is a 75-residue protein sequence, read N- to C-terminus: DNA-directed RNA polymerase subunit omega (75 aa).

It belongs to the RNA polymerase subunit omega family. In terms of assembly, in cyanobacteria the RNAP catalytic core is composed of 2 alpha, 1 beta, 1 beta', 1 gamma and 1 omega subunit. When a sigma factor is associated with the core the holoenzyme is formed, which can initiate transcription.

It carries out the reaction RNA(n) + a ribonucleoside 5'-triphosphate = RNA(n+1) + diphosphate. In terms of biological role, promotes RNA polymerase assembly. Latches the N- and C-terminal regions of the beta' subunit thereby facilitating its interaction with the beta and alpha subunits. The polypeptide is DNA-directed RNA polymerase subunit omega (Cyanothece sp. (strain PCC 7425 / ATCC 29141)).